We begin with the raw amino-acid sequence, 229 residues long: Ribonuclease 3 (229 aa).

Residues tryptophan 4–glycine 133 enclose the RNase III domain. Glutamate 46 is a Mg(2+) binding site. Aspartate 50 is an active-site residue. Mg(2+) contacts are provided by aspartate 119 and glutamate 122. Residue glutamate 122 is part of the active site. The DRBM domain maps to aspartate 159–histidine 228.

This sequence belongs to the ribonuclease III family. As to quaternary structure, homodimer. Mg(2+) is required as a cofactor.

Its subcellular location is the cytoplasm. The enzyme catalyses Endonucleolytic cleavage to 5'-phosphomonoester.. Functionally, digests double-stranded RNA. Involved in the processing of primary rRNA transcript to yield the immediate precursors to the large and small rRNAs (23S and 16S). Processes some mRNAs, and tRNAs when they are encoded in the rRNA operon. Processes pre-crRNA and tracrRNA of type II CRISPR loci if present in the organism. The chain is Ribonuclease 3 from Listeria welshimeri serovar 6b (strain ATCC 35897 / DSM 20650 / CCUG 15529 / CIP 8149 / NCTC 11857 / SLCC 5334 / V8).